A 762-amino-acid chain; its full sequence is 5-methyltetrahydropteroyltriglutamate--homocysteine methyltransferase (762 aa).

5-methyltetrahydropteroyltri-L-glutamate contacts are provided by residues 17-20 (REWK) and Lys-111. Residues 435–437 (IGS) and Glu-488 each bind L-homocysteine. L-methionine is bound by residues 435-437 (IGS) and Glu-488. 5-methyltetrahydropteroyltri-L-glutamate is bound by residues 519–520 (RC) and Trp-565. L-homocysteine is bound at residue Asp-603. L-methionine is bound at residue Asp-603. Position 609 (Glu-609) interacts with 5-methyltetrahydropteroyltri-L-glutamate. His-645, Cys-647, and Glu-669 together coordinate Zn(2+). The active-site Proton donor is the His-698. Cys-730 is a binding site for Zn(2+).

Belongs to the vitamin-B12 independent methionine synthase family. Zn(2+) is required as a cofactor.

It carries out the reaction 5-methyltetrahydropteroyltri-L-glutamate + L-homocysteine = tetrahydropteroyltri-L-glutamate + L-methionine. The protein operates within amino-acid biosynthesis; L-methionine biosynthesis via de novo pathway; L-methionine from L-homocysteine (MetE route): step 1/1. Functionally, catalyzes the transfer of a methyl group from 5-methyltetrahydrofolate to homocysteine resulting in methionine formation. This chain is 5-methyltetrahydropteroyltriglutamate--homocysteine methyltransferase, found in Bacillus cereus (strain AH820).